Consider the following 347-residue polypeptide: MTLDHQIINPTLKWSQPAVPSGGPLVQHAHTTLDSDAGLTENPLTKLLAIGKEDDNAQWHMEDVIEDIIGMESSFKEEGADSPLLMQRTLSGSILDVYSGEQGISPINMGLTSASCPSSLPMKREITETDTRALAKERQKKDNHNLIERRRRYNINYRIKELGTLIPKSNDPDMRWNKGTILKASVEYIKWLQKEQQRARELEHRQKKLEQANRRLLLRIQELEIQARTHGLPTLASLGTVDLGAHVTKQQSHPEQNSVDYCQQLTVSQRPSPEFCDQAIAFSDPLSYFTDLSFSAALKEEQRLDGMLLDDTISPFGTDPLLSATSPAVSKESSRRSSFSSDDGDEL.

The necessary for transcriptional transactivation stretch occupies residues 1–119 (MTLDHQIINP…GLTSASCPSS (119 aa)). One can recognise a bHLH domain in the interval 139–192 (QKKDNHNLIERRRRYNINYRIKELGTLIPKSNDPDMRWNKGTILKASVEYIKWL). Residues 271 to 347 (PSPEFCDQAI…SFSSDDGDEL (77 aa)) form a necessary for transcriptional transactivation region. The interval 319-347 (DPLLSATSPAVSKESSRRSSFSSDDGDEL) is disordered. Residues 326–341 (SPAVSKESSRRSSFSS) are compositionally biased toward low complexity.

Belongs to the MiT/TFE family. Homodimer. Forms heterodimers with MITF and TFE3. Interacts with MITF.

It localises to the nucleus. Its function is as follows. Transcriptional regulator that acts as a repressor or an activator. Acts as a transcriptional repressor on minimal promoter containing element F (that includes an E-box sequence). Binds to element F in an E-box sequence-specific manner. Acts as a transcriptional transactivator on the proximal promoter region of the tartrate-resistant acid phosphatase (TRAP) E-box containing promoter. Collaborates with MITF in target gene activation. Acts as a transcriptional repressor on minimal promoter containing mu E3 enhancer sequence. Binds to mu E3 DNA sequence of the immunoglobulin heavy-chain gene enhancer. Binds DNA in a homo- or heterodimeric form. The protein is Transcription factor EC (TFEC) of Pan troglodytes (Chimpanzee).